The primary structure comprises 776 residues: MGTVPDPLRSAKTSLIAASGKEDDLGEPQAASPRHRPALLCKNANGFSGAPAEPDLSPRAAAEALMQVCEHETTQPDMSSPGVFNEVQKAPATFNSPGNPQLPGSSQPAASAPSSAAGRDLIHTPLTMPANQHTCQSIPGDQPNAITSSMPEDSLMRSQRTSNREQPEKPSCPVGGVLSSSKDQVSCEFPSPETIQGTVQTPVTAARVVSHSSSPVGGPEGERQGAICDSEMRSCKPLTRESGCSENKQPSVTASGPQGTTSVTPQPTPLTSEPSACPPGPEKVPLPAQRQMSRFKEASTMTNQAESEIKEVPSRAWQDAEVQAVASVESRSVSTSPSILTAFLKESRAPEHFEQEQLRVICHSSGSHTLELSDSTLAPQESSQCPGIMPQVHIQAAAAESTAFQRENKLASLPGGVLKTSSINLVSSNAQHTCKEDGRLAGMTPVREESTAKKLAGTNSSSLKATAIDQISISACSQAETSYGLGKFETRPSEFAEKTTNGHKTDPDCKLSDSCGSISKADHSGSLDPTNKGDAREKKPASPQVVKEKESTGTDTSDAKTLLLNPKSQESGGTESAANPTPSPIRKNQESTLEENRQTKTATSLSLPSDPMGDSSPGSGKKTPSRSVKASPRRPSRVSEFLKEQKLNVTAAAAQVGLTPGDKKKQLGADSKLQLKQSKRVRDVVWDEQGMTWEVYGASLDAESLGIAIQNHLQRQIREHEKLIKTQNSQTRRSISSDTSSNKKLRGRQHSVFQSMLQNFRRPNCCVRPAPSSVLD.

Disordered stretches follow at residues M1–P37 and V68–V312. Low complexity predominate over residues Q101–G118. 2 stretches are compositionally biased toward polar residues: residues P129–T161 and E193–V203. Residues V208–G217 are compositionally biased toward low complexity. The segment covering S242–P274 has biased composition (polar residues). Phosphoserine occurs at positions 332 and 365. Disordered stretches follow at residues I518–R637 and L723–R748. Positions K520 to T552 are enriched in basic and acidic residues. Positions P566 to P580 are enriched in polar residues. A compositionally biased stretch (low complexity) spans S604 to G620. Positions K725–N742 are enriched in polar residues.

Functionally, may be involved in neurite outgrowth. The protein is G protein-regulated inducer of neurite outgrowth 3 (GPRIN3) of Homo sapiens (Human).